A 65-amino-acid polypeptide reads, in one-letter code: Large ribosomal subunit protein bL32 (65 aa).

Belongs to the bacterial ribosomal protein bL32 family.

This chain is Large ribosomal subunit protein bL32, found in Phytoplasma australiense.